A 193-amino-acid polypeptide reads, in one-letter code: Xanthine phosphoribosyltransferase (193 aa).

Positions 20 and 27 each coordinate xanthine. Residue 129–133 (ANGKA) coordinates 5-phospho-alpha-D-ribose 1-diphosphate. Residue lysine 157 coordinates xanthine.

The protein belongs to the purine/pyrimidine phosphoribosyltransferase family. Xpt subfamily. In terms of assembly, homodimer.

The protein localises to the cytoplasm. It catalyses the reaction XMP + diphosphate = xanthine + 5-phospho-alpha-D-ribose 1-diphosphate. Its pathway is purine metabolism; XMP biosynthesis via salvage pathway; XMP from xanthine: step 1/1. Its function is as follows. Converts the preformed base xanthine, a product of nucleic acid breakdown, to xanthosine 5'-monophosphate (XMP), so it can be reused for RNA or DNA synthesis. The polypeptide is Xanthine phosphoribosyltransferase (Bifidobacterium longum (strain NCC 2705)).